The following is a 389-amino-acid chain: MTSRKPLGRYRRIVIKIGSALLVDRKAGLKKAWLDAMCADIAGLKARGIDVLVVSSGAIALGRSVLDLPSGALKLEESQAAAAVGQIALARAWSESLSRDEIVAGQILLTLGDTEERRRYLNARATINQLLKIGAVPIINENDTVATSEIRYGDNDRLAARVATMTGADLLILLSDIDGLYTAPPHLDPNATFLETISEITPEIEAMAGGAASELSRGGMRTKIDAGKIATTSGCAMIIASGKTESPLSAIENGARSSWFAPSGTPVTARKTWIAGQLQPAGELHVDEGAVTALGAGKSLLPAGLRSVSGLFSRGDTVAIIGPAGREIARGLVSYDAEDARRIAGRKSAEIEAILGYAGRAAMVHRDDMVMTAQIRPKSERQKKDASYA.

Position 16 (lysine 16) interacts with ATP. Serine 56, aspartate 143, and asparagine 155 together coordinate substrate. 175 to 176 (SD) serves as a coordination point for ATP. Residues 281-358 (AGELHVDEGA…AEIEAILGYA (78 aa)) form the PUA domain.

The protein belongs to the glutamate 5-kinase family.

It localises to the cytoplasm. It catalyses the reaction L-glutamate + ATP = L-glutamyl 5-phosphate + ADP. Its pathway is amino-acid biosynthesis; L-proline biosynthesis; L-glutamate 5-semialdehyde from L-glutamate: step 1/2. In terms of biological role, catalyzes the transfer of a phosphate group to glutamate to form L-glutamate 5-phosphate. The polypeptide is Glutamate 5-kinase (Rhizobium etli (strain ATCC 51251 / DSM 11541 / JCM 21823 / NBRC 15573 / CFN 42)).